The chain runs to 354 residues: Rhodopsin (354 aa).

Over 1-36 the chain is Extracellular; it reads MNGTEGPAFYVPMSNATGVVRSPYEYPQYYLVAPWA. N-linked (GlcNAc...) asparagine glycosylation is found at N2 and N15. A helical transmembrane segment spans residues 37–61; sequence YGLLAAYMFFLIITGFPVNFLTLYV. Over 62–73 the chain is Cytoplasmic; that stretch reads TIEHKKLRTPLN. A helical transmembrane segment spans residues 74–96; sequence YILLNLAIADLFMVFGGFTTTMY. Topologically, residues 97 to 110 are extracellular; sequence TSLHGYFVFGRLGC. A disulfide bond links C110 and C187. Residues 111 to 133 form a helical membrane-spanning segment; sequence NLEGFFATLGGEMGLWSLVVLAI. Residues 134–136 carry the 'Ionic lock' involved in activated form stabilization motif; it reads ERW. Topologically, residues 134–152 are cytoplasmic; the sequence is ERWMVVCKPVSNFRFGENH. A helical transmembrane segment spans residues 153 to 173; that stretch reads AIMGVAFTWVMACSCAVPPLV. The Extracellular portion of the chain corresponds to 174–202; that stretch reads GWSRYIPEGMQCSCGVDYYTRTPGVNNES. N-linked (GlcNAc...) asparagine glycosylation occurs at N200. A helical transmembrane segment spans residues 203–224; it reads FVIYMFIVHFFIPLIVIFFCYG. At 225–252 the chain is on the cytoplasmic side; that stretch reads RLVCTVKEAAAQQQESETTQRAEREVTR. Residues 253–274 form a helical membrane-spanning segment; sequence MVIIMVIAFLICWLPYAGVAWY. At 275-286 the chain is on the extracellular side; that stretch reads IFTHQGSEFGPV. The helical transmembrane segment at 287 to 308 threads the bilayer; sequence FMTLPAFFAKTSAVYNPCIYIC. K296 bears the N6-(retinylidene)lysine mark. The Cytoplasmic segment spans residues 309-354; sequence MNKQFRHCMITTLCCGKNPFEEEEGASTTASKTEASSVSSSSVSPA. Residues 333–354 form a disordered region; it reads GASTTASKTEASSVSSSSVSPA. The segment covering 334–354 has biased composition (low complexity); the sequence is ASTTASKTEASSVSSSSVSPA.

Belongs to the G-protein coupled receptor 1 family. Opsin subfamily. Post-translationally, phosphorylated on some or all of the serine and threonine residues present in the C-terminal region. Contains one covalently linked retinal chromophore. In terms of tissue distribution, retinal rod photoreceptor cells, predominantly in the outer segments (at protein level). Retinal rod photoreceptor cells.

It localises to the membrane. It is found in the cell projection. The protein localises to the cilium. Its subcellular location is the photoreceptor outer segment. Functionally, photoreceptor required for image-forming vision at low light intensity. While most salt water fish species use retinal as chromophore, most freshwater fish use 3-dehydroretinal, or a mixture of retinal and 3-dehydroretinal. Light-induced isomerization of 11-cis to all-trans retinal triggers a conformational change that activates signaling via G-proteins. Subsequent receptor phosphorylation mediates displacement of the bound G-protein alpha subunit by arrestin and terminates signaling. This chain is Rhodopsin (rho), found in Danio rerio (Zebrafish).